The following is a 452-amino-acid chain: Selenide, water dikinase 2 (452 aa).

At A2 the chain carries N-acetylalanine. A Phosphoserine modification is found at S49. U63 is an active-site residue. U63 is a non-standard amino acid (selenocysteine). K66 is an ATP binding site. Residues 86–111 (PPLTSGLVGGQEETVQEGGLSTRPGP) are disordered. Low complexity predominate over residues 95-105 (GQEETVQEGGL). ATP contacts are provided by residues 121–123 (GMD), D141, D164, and 215–218 (GGQT). D123 contributes to the Mg(2+) binding site. Mg(2+) is bound at residue D164. D319 is a binding site for Mg(2+).

It belongs to the selenophosphate synthase 1 family. Class I subfamily. In terms of assembly, homodimer. Mg(2+) is required as a cofactor. In terms of processing, truncated SEPHS2 proteins produced by failed UGA/Sec decoding are ubiquitinated by the CRL2(KLHDC3) complex, which recognizes the glycine (Gly) at the C-terminus of truncated SEPHS2 proteins.

It carries out the reaction hydrogenselenide + ATP + H2O = selenophosphate + AMP + phosphate + 2 H(+). Functionally, synthesizes selenophosphate from selenide and ATP. The sequence is that of Selenide, water dikinase 2 (Sephs2) from Mus musculus (Mouse).